The chain runs to 1040 residues: Multidrug resistance protein MdtB (1040 aa).

Transmembrane regions (helical) follow at residues 16 to 36, 347 to 367, 369 to 389, 396 to 416, 440 to 460, 472 to 492, 537 to 557, 863 to 883, 888 to 908, 911 to 931, 968 to 988, and 998 to 1018; these read FIMRPVATTLLMVAILLAGII, LMMAIALVVMIIYLFLRNIPA, IIPGVAVPLSLIGTFAVMVFL, LTLMALTIATGFVVDDAIVVI, IGFTIISLTFSLIAVLIPLLF, FAITLAVAILISAVVSLTLTP, WLTLSVALSTLLLSVLLWVFI, LGSTVWLIVAAVVAMYIVLGI, FIHPITILSTLPTAGVGALLA, IAGSELDVIAIIGIILLIGIV, ILMTTLAALLGALPLMLSTGV, and IGMVGGLIVSQVLTLFTTPVI.

Belongs to the resistance-nodulation-cell division (RND) (TC 2.A.6) family. MdtB subfamily. Part of a tripartite efflux system composed of MdtA, MdtB and MdtC. MdtB forms a heteromultimer with MdtC.

The protein localises to the cell inner membrane. In terms of biological role, the MdtABC tripartite complex confers resistance against novobiocin and deoxycholate. This Escherichia coli O7:K1 (strain IAI39 / ExPEC) protein is Multidrug resistance protein MdtB.